Consider the following 578-residue polypeptide: Frizzled-2 (578 aa).

The signal sequence occupies residues 1 to 17; the sequence is MLLRISVLFLLLGSCGA. At 18–236 the chain is on the extracellular side; that stretch reads LFGKRQKCEQ…AESHSLVSNW (219 aa). Residues 20-144 enclose the FZ domain; sequence GKRQKCEQIT…MSTGNICAAP (125 aa). Cystine bridges form between C25–C86, C33–C79, C70–C108, C97–C141, and C101–C125. An N-linked (GlcNAc...) asparagine glycan is attached at N39. The interval 138–175 is disordered; sequence GNICAAPPDTPKKQHKGHHHKNQNQNQNQNHNYSPDGP. A compositionally biased stretch (basic residues) spans 150–159; that stretch reads KQHKGHHHKN. Residues 160 to 169 are compositionally biased toward low complexity; the sequence is QNQNQNQNHN. N213 carries N-linked (GlcNAc...) asparagine glycosylation. The chain crosses the membrane as a helical span at residues 237-257; it reads MAFWSITCCVLASFTFLTFLI. Topologically, residues 258 to 268 are cytoplasmic; that stretch reads ETDRFQYPERP. Residues 269–289 traverse the membrane as a helical segment; it reads IFMLAFCQLMVAVGFMIRYFV. The Extracellular segment spans residues 290 to 312; sequence GHEEIACDSMRIKGADDNSGSLC. Residues 313 to 333 form a helical membrane-spanning segment; it reads FVVFLLTYFFGMAASVWWVIL. Residues 334 to 354 lie on the Cytoplasmic side of the membrane; sequence SLTWVLSAASKWSPEAISSFS. Residues 355–375 form a helical membrane-spanning segment; sequence FHFHVVGWCLPAIQTVLVIVF. Residues 376–398 lie on the Extracellular side of the membrane; the sequence is NAIDGDPITGICYVGNTDLQFQR. Residues 399–419 traverse the membrane as a helical segment; sequence IFVLFPLLVYFIVGVLFLVIG. Topologically, residues 420-449 are cytoplasmic; sequence FCNLWSIRNEVQKQHPSLESAHKITQLMSK. The helical transmembrane segment at 450-470 threads the bilayer; the sequence is IGIFSLLYTIPSLLIICVLFY. Residues 471–497 lie on the Extracellular side of the membrane; it reads EQNHRSLWEQSQLCSCSPKQTIGDSSL. A helical membrane pass occupies residues 498–518; it reads IISLIKTCCMCILGWTSGFWV. Over 519–578 the chain is Cytoplasmic; it reads CSTKTLSSWKNAICCLGSSRSLPKYQPADILYAKSDMSSSQFYNTSLRHNHLYGGIPDKL. The Lys-Thr-X-X-X-Trp motif, mediates interaction with the PDZ domain of Dvl family members motif lies at 522–527; sequence KTLSSW. Residues 556–558 carry the PDZ-binding motif; that stretch reads SSS.

Belongs to the G-protein coupled receptor Fz/Smo family. As to expression, expressed in two pairs of head neurons and throughout the pharynx.

The protein resides in the cell membrane. In terms of biological role, receptor for Wnt proteins. Most frizzled receptors are coupled to the beta-catenin canonical signaling pathway, which leads to the activation of disheveled proteins, inhibition of gsk-3 kinase, nuclear accumulation of beta-catenin and activation of Wnt target genes. A second signaling pathway involving PKC and calcium fluxes has been seen for some family members, but it is not yet clear if it represents a distinct pathway or if it can be integrated in the canonical pathway, as PKC seems to be required for Wnt-mediated inactivation of gsk-3 kinase. Both pathways seem to involve interactions with G-proteins. Required for the migration and axon formation and guidance of different neuronal cell types including canal-associated neurons (CAN), hermaphrodite-specific neurons (HSN), anterior lateral microtubule neurons (ALM), and the right Q neuroblast (QR) and its descendants. Directs ALM migration through frizzled protein mom-5 and Wnt ligands cwn-1, cwn-2 and egl-20. May act redundantly with mom-5 to direct CAN migration. Plays a role in the organization of head ganglion cells. Probably by acting as a receptor for Wnt ligand cwn-2, plays a role in the positioning of the nerve ring and may in addition positively regulate the neurite outgrowth of RME GABAergic motor neurons along the anterior-posterior axis of the body. The chain is Frizzled-2 from Caenorhabditis elegans.